The sequence spans 375 residues: Anhydro-N-acetylmuramic acid kinase (375 aa).

19-26 (GTSLDGVD) is a binding site for ATP.

It belongs to the anhydro-N-acetylmuramic acid kinase family.

The catalysed reaction is 1,6-anhydro-N-acetyl-beta-muramate + ATP + H2O = N-acetyl-D-muramate 6-phosphate + ADP + H(+). Its pathway is amino-sugar metabolism; 1,6-anhydro-N-acetylmuramate degradation. It participates in cell wall biogenesis; peptidoglycan recycling. Catalyzes the specific phosphorylation of 1,6-anhydro-N-acetylmuramic acid (anhMurNAc) with the simultaneous cleavage of the 1,6-anhydro ring, generating MurNAc-6-P. Is required for the utilization of anhMurNAc either imported from the medium or derived from its own cell wall murein, and thus plays a role in cell wall recycling. The polypeptide is Anhydro-N-acetylmuramic acid kinase (Ruegeria sp. (strain TM1040) (Silicibacter sp.)).